We begin with the raw amino-acid sequence, 301 residues long: D-alanine--D-alanine ligase A (301 aa).

Residues 96-290 (KKILRYEGVE…YSKLLDMIIE (195 aa)) enclose the ATP-grasp domain. 123-178 (LDKLGFPLVVKPNSGGSSVGVKIVYNKNELISMLETVFEWDSEVVIEKYIKGDEIT) serves as a coordination point for ATP. Residues Asp-245, Glu-257, and Asn-259 each coordinate Mg(2+).

The protein belongs to the D-alanine--D-alanine ligase family. Mg(2+) is required as a cofactor. Mn(2+) serves as cofactor.

The protein resides in the cytoplasm. The catalysed reaction is 2 D-alanine + ATP = D-alanyl-D-alanine + ADP + phosphate + H(+). It participates in cell wall biogenesis; peptidoglycan biosynthesis. Functionally, cell wall formation. In Bacillus cereus (strain ATCC 14579 / DSM 31 / CCUG 7414 / JCM 2152 / NBRC 15305 / NCIMB 9373 / NCTC 2599 / NRRL B-3711), this protein is D-alanine--D-alanine ligase A.